We begin with the raw amino-acid sequence, 603 residues long: F-box only protein 46 (603 aa).

Positions 20–63 (YSQNQPRPPSAALKPSACPEPGGGAEPDHGPAHSENTPPALATE) are disordered. 2 positions are modified to phosphoserine; by ATM: Ser21 and Ser67. Disordered stretches follow at residues 111–163 (GGSR…PASA), 235–301 (EAQR…ARAK), 326–360 (LLARADEASEGDSPAPARPEDTPPAPPPPPARDCG), and 396–440 (TVSP…AEGT). The span at 152-163 (GPPAAEEGPASA) shows a compositional bias: low complexity. Ser338 is subject to Phosphoserine. Thr347 carries the phosphothreonine modification. Composition is skewed to pro residues over residues 347–356 (TPPAPPPPPA) and 417–426 (DGPPEPPPAD). The 53-residue stretch at 470 to 522 (RQYMLLLPEHVLVKIFSFLPTRALAALKCTCHHFKGIIEAFGVRATDSRWSRD) folds into the F-box domain.

As to quaternary structure, part of a SCF (SKP1-cullin-F-box) protein ligase complex SCF(FBXO46) composed of CUL1, SKP1, RBX1 and FBXO46. In terms of processing, phosphorylated by ATM in response to DNA damage, promoting ubiquitination and degradation by the SCF(FBXO31) complex. Post-translationally, ATM-phosphorylated FBXO46 is ubiquitinated and degradaded by the SCF(FBXO31) complex in response to DNA damage.

The protein operates within protein modification; protein ubiquitination. Functionally, substrate-recognition component of the SCF(FBXO46) protein ligase complex, which mediates the ubiquitination and degradation of target proteins. In absence of stress, the SCF(FBXO46) complex catalyzes ubiquitination and degradation of MTOR-phosphorylated FBXO31. The polypeptide is F-box only protein 46 (Homo sapiens (Human)).